The primary structure comprises 212 residues: Thiamine-phosphate synthase (212 aa).

38–42 (QLREK) serves as a coordination point for 4-amino-2-methyl-5-(diphosphooxymethyl)pyrimidine. Mg(2+) is bound by residues aspartate 71 and aspartate 90. Lysine 138 lines the 4-amino-2-methyl-5-(diphosphooxymethyl)pyrimidine pocket. Glycine 166 lines the 2-[(2R,5Z)-2-carboxy-4-methylthiazol-5(2H)-ylidene]ethyl phosphate pocket.

It belongs to the thiamine-phosphate synthase family. Mg(2+) serves as cofactor.

The enzyme catalyses 2-[(2R,5Z)-2-carboxy-4-methylthiazol-5(2H)-ylidene]ethyl phosphate + 4-amino-2-methyl-5-(diphosphooxymethyl)pyrimidine + 2 H(+) = thiamine phosphate + CO2 + diphosphate. The catalysed reaction is 2-(2-carboxy-4-methylthiazol-5-yl)ethyl phosphate + 4-amino-2-methyl-5-(diphosphooxymethyl)pyrimidine + 2 H(+) = thiamine phosphate + CO2 + diphosphate. It carries out the reaction 4-methyl-5-(2-phosphooxyethyl)-thiazole + 4-amino-2-methyl-5-(diphosphooxymethyl)pyrimidine + H(+) = thiamine phosphate + diphosphate. It functions in the pathway cofactor biosynthesis; thiamine diphosphate biosynthesis; thiamine phosphate from 4-amino-2-methyl-5-diphosphomethylpyrimidine and 4-methyl-5-(2-phosphoethyl)-thiazole: step 1/1. In terms of biological role, condenses 4-methyl-5-(beta-hydroxyethyl)thiazole monophosphate (THZ-P) and 2-methyl-4-amino-5-hydroxymethyl pyrimidine pyrophosphate (HMP-PP) to form thiamine monophosphate (TMP). The polypeptide is Thiamine-phosphate synthase (Chlamydia abortus (strain DSM 27085 / S26/3) (Chlamydophila abortus)).